We begin with the raw amino-acid sequence, 336 residues long: Phosphoribosylformylglycinamidine cyclo-ligase (336 aa).

This sequence belongs to the AIR synthase family.

Its subcellular location is the cytoplasm. It catalyses the reaction 2-formamido-N(1)-(5-O-phospho-beta-D-ribosyl)acetamidine + ATP = 5-amino-1-(5-phospho-beta-D-ribosyl)imidazole + ADP + phosphate + H(+). It functions in the pathway purine metabolism; IMP biosynthesis via de novo pathway; 5-amino-1-(5-phospho-D-ribosyl)imidazole from N(2)-formyl-N(1)-(5-phospho-D-ribosyl)glycinamide: step 2/2. The chain is Phosphoribosylformylglycinamidine cyclo-ligase from Thermoanaerobacter pseudethanolicus (strain ATCC 33223 / 39E) (Clostridium thermohydrosulfuricum).